The sequence spans 282 residues: V-set domain-containing T-cell activation inhibitor 1 (282 aa).

A signal peptide spans 1–24; it reads MASLGQILFWSIISIIIILAGAIA. The Extracellular segment spans residues 25-259; sequence LIIGFGISGR…HLQLLNSKAS (235 aa). Ig-like V-type domains lie at 35-146 and 153-241; these read HSIT…LEYK and PEVN…IKVT. Disulfide bonds link cysteine 56-cysteine 130 and cysteine 168-cysteine 225. An N-linked (GlcNAc...) asparagine glycan is attached at asparagine 216. The helical transmembrane segment at 260–280 threads the bilayer; the sequence is LCVSSFFAISWALLPLSPYLM. Topologically, residues 281–282 are cytoplasmic; the sequence is LK.

The protein belongs to the immunoglobulin superfamily. BTN/MOG family. In terms of processing, N-glycosylated. Overexpressed in breast, ovarian, endometrial, renal cell (RCC) and non-small-cell lung cancers (NSCLC). Expressed on activated T- and B-cells, monocytes and dendritic cells, but not expressed in most normal tissues (at protein level). Widely expressed, including in kidney, liver, lung, ovary, placenta, spleen and testis.

It localises to the cell membrane. Its function is as follows. Negatively regulates T-cell-mediated immune response by inhibiting T-cell activation, proliferation, cytokine production and development of cytotoxicity. When expressed on the cell surface of tumor macrophages, plays an important role, together with regulatory T-cells (Treg), in the suppression of tumor-associated antigen-specific T-cell immunity. Involved in promoting epithelial cell transformation. In Homo sapiens (Human), this protein is V-set domain-containing T-cell activation inhibitor 1.